The chain runs to 258 residues: Protein STAY-GREEN LIKE, chloroplastic (258 aa).

The protein belongs to the staygreen family. In terms of tissue distribution, strongly expressed in leaves, stems and panicles, and at lower levels in roots and seeds.

Functionally, promotes chlorophyll degradation in leaves. May be involved in LHCI proteins degradation, regulating the balance between LHCI and LHCII. This is Protein STAY-GREEN LIKE, chloroplastic from Oryza sativa subsp. japonica (Rice).